We begin with the raw amino-acid sequence, 101 residues long: Large ribosomal subunit protein uL24 (101 aa).

The protein belongs to the universal ribosomal protein uL24 family. In terms of assembly, part of the 50S ribosomal subunit.

Its function is as follows. One of two assembly initiator proteins, it binds directly to the 5'-end of the 23S rRNA, where it nucleates assembly of the 50S subunit. Functionally, one of the proteins that surrounds the polypeptide exit tunnel on the outside of the subunit. This is Large ribosomal subunit protein uL24 from Dinoroseobacter shibae (strain DSM 16493 / NCIMB 14021 / DFL 12).